We begin with the raw amino-acid sequence, 567 residues long: ETHYLENE INSENSITIVE 3-like 3 protein (567 aa).

Residues 24 to 44 (NVAEIDVSDEEIDADDLERRM) are a coiled coil. 2 disordered regions span residues 55 to 81 (KERQKAGSQGAQTKETPKKISDQAQRK) and 286 to 393 (IQQP…RNIL). Basic and acidic residues predominate over residues 69-79 (ETPKKISDQAQ). Residues 162–288 (SQFVLQDLQD…LNQEESLIQQ (127 aa)) mediate DNA binding. Positions 286 to 299 (IQQPSSDNGNSNVT) are enriched in polar residues. Residues 300–312 (ETHRRGNNADRRK) are compositionally biased toward basic and acidic residues. Positions 363–372 (KHRRRKRPRI) are enriched in basic residues.

This sequence belongs to the EIN3 family. As to quaternary structure, interacts with MYB72.

Its subcellular location is the nucleus. Functionally, probable transcription factor that may be involved in the ethylene response pathway. This chain is ETHYLENE INSENSITIVE 3-like 3 protein (EIL3), found in Arabidopsis thaliana (Mouse-ear cress).